Reading from the N-terminus, the 182-residue chain is uncharacterized protein (182 aa).

The protein belongs to the DNA 3' phosphatase family.

This is an uncharacterized protein from Autographa californica nuclear polyhedrosis virus (AcMNPV).